We begin with the raw amino-acid sequence, 1109 residues long: MGRRNSYFPGNFVPLFFVFIVLILQQERVICQEDRSLDNPAANRLYNQFVFDKISNLTEVFEDDIKRELGFCITNVKEDYNEAFNFSTKPDFLNACGKTTKGDMMQRICTAAEVRIYFNGLLGGAKRATNYLKPNKNCNLSSWMSGCEPGWACRTAKDVKVDLKDDKNVPVRTQQCAPCCAGFFCPRGITCMIPCPLGAYCPEANLNRTTGLCDPYHYQLPSGQPNHTCGGADIWADIGSSSEVFCSAGSFCPSTIDKLPCTKGHYCRTGSTAELNCFKLATCNPRSTNQNITAYGIMLFAGLGFLLIILYNCSDQVLATRERRQAKSREKAVQSVRDSQSREKWKSAKDIAKKHATELQQSFSRTFSRRKSMKQPDLMRGLSQAKPGSDAALPPMLGSSSDTKKGKKKEKNKLTEMLHDIEQNPEDPEGFNLEIGDKNIKKHAPKGKALHTQSQMFRYAYGQIEKEKAMQEQNKNLTFSGVISMANDIDIRKRPMIEVAFKDLSITLKGKNKHLMRCVTGKLSPGRVSAVMGPSGAGKTTFLTALTGKAPGCIMTGMILVNGKVESIQSYKKIIGFVPQDDIVHGNLTVEENLWFSARCRLPADLPKPEKVLVVERVIESLGLQHVRDSLVGTVEKRGISGGQRKRVNVGLEMVMEPSLLILDEPTSGLDSSSSQLLLRALRREALEGVNICMVVHQPSYTLFRMFDDLILLAKGGLICYQGPVKKVEEYFSSLGIVVPERVNPPDYYIDILEGILKPSTSSGVTYKQLPVRWMLHNGYPVPMDMLKSIEGMASSASGENSAHGGSAHGSVVGDDGTSFAGEFWQDVKANVEIKKDNLQNNFSSSGDLSEREVPGVYQQYRYFLGRLGKQRLREARTLAVDYLILLLAGICLGTLAKVSDETFGAMGYTYTVIAVSLLCKITALRSFSLDKLHYWRESRAGMSSLAYFLAKDTVDHFNTIVKPLVYLSMFYFFNNPRSTVTDNYVVLICLVYCVTGIAYTLAILFEPGPAQLWSVLLPVVLTLIATSTNDNKIVDSISELCYTRWALEAFVVSNAQRYKGVWLITRCGSLMENGYNIKHFPRCLVFLTLTGILSRCAAFFCMVTFQKK.

The next 2 membrane-spanning stretches (helical) occupy residues asparagine 5–glutamine 25 and asparagine 291–tyrosine 311. A disordered region spans residues glutamine 325–lysine 411. A compositionally biased stretch (basic and acidic residues) spans serine 339 to threonine 357. The ABC transporter domain maps to valine 499 to glutamate 741. Glycine 533–threonine 540 is an ATP binding site. One can recognise an ABC transmembrane type-2 domain in the interval glutamine 859 to alanine 1056. Helical transmembrane passes span leucine 879–valine 899, phenylalanine 904–alanine 924, threonine 954–phenylalanine 974, valine 986–phenylalanine 1006, proline 1008–serine 1028, and cysteine 1084–valine 1104.

It belongs to the ABC transporter superfamily. ABCG family. Eye pigment precursor importer (TC 3.A.1.204) subfamily.

It localises to the membrane. The protein is ABC transporter G family member 28 (ABCG28) of Arabidopsis thaliana (Mouse-ear cress).